Consider the following 265-residue polypeptide: Hydroxyethylthiazole kinase (265 aa).

Met-50 is a binding site for substrate. Residues Arg-125 and Thr-171 each contribute to the ATP site. Gly-198 serves as a coordination point for substrate.

The protein belongs to the Thz kinase family. Requires Mg(2+) as cofactor.

It carries out the reaction 5-(2-hydroxyethyl)-4-methylthiazole + ATP = 4-methyl-5-(2-phosphooxyethyl)-thiazole + ADP + H(+). It functions in the pathway cofactor biosynthesis; thiamine diphosphate biosynthesis; 4-methyl-5-(2-phosphoethyl)-thiazole from 5-(2-hydroxyethyl)-4-methylthiazole: step 1/1. In terms of biological role, catalyzes the phosphorylation of the hydroxyl group of 4-methyl-5-beta-hydroxyethylthiazole (THZ). The polypeptide is Hydroxyethylthiazole kinase (Salmonella schwarzengrund (strain CVM19633)).